Here is a 645-residue protein sequence, read N- to C-terminus: ATP-dependent zinc metalloprotease FtsH (645 aa).

Topologically, residues 1 to 6 are cytoplasmic; that stretch reads MDQRPK. A helical transmembrane segment spans residues 7–27; that stretch reads FGMILFYIVLGVFLMVALRGL. The Periplasmic segment spans residues 28–110; the sequence is YTTDTNLSVP…VVYEKGNDSL (83 aa). Residues 111-131 traverse the membrane as a helical segment; sequence FWVNLLGTIIPLAIIVFIWFF. The Cytoplasmic segment spans residues 132 to 645; the sequence is AMRSLSGRNS…AKEGNEDEKN (514 aa). 204–211 provides a ligand contact to ATP; the sequence is GPPGTGKT. Histidine 426 contributes to the Zn(2+) binding site. Residue glutamate 427 is part of the active site. Positions 430 and 503 each coordinate Zn(2+). Positions 623-645 are disordered; that stretch reads SKRKVSAVSTNEEAKEGNEDEKN. Residues 634 to 645 are compositionally biased toward basic and acidic residues; the sequence is EEAKEGNEDEKN.

The protein in the central section; belongs to the AAA ATPase family. This sequence in the C-terminal section; belongs to the peptidase M41 family. Homohexamer. Zn(2+) serves as cofactor.

The protein localises to the cell inner membrane. Acts as a processive, ATP-dependent zinc metallopeptidase for both cytoplasmic and membrane proteins. Plays a role in the quality control of integral membrane proteins. The polypeptide is ATP-dependent zinc metalloprotease FtsH (Kosmotoga olearia (strain ATCC BAA-1733 / DSM 21960 / TBF 19.5.1)).